A 90-amino-acid polypeptide reads, in one-letter code: Small ribosomal subunit protein uS19 (90 aa).

This sequence belongs to the universal ribosomal protein uS19 family.

Functionally, protein S19 forms a complex with S13 that binds strongly to the 16S ribosomal RNA. The protein is Small ribosomal subunit protein uS19 of Clostridium beijerinckii (strain ATCC 51743 / NCIMB 8052) (Clostridium acetobutylicum).